A 219-amino-acid polypeptide reads, in one-letter code: Transmembrane emp24 domain-containing protein 10 (219 aa).

A signal peptide spans 1–31; that stretch reads MSGWSGPLARRGPGPLALLFLFLLGPSSVLA. A required for interaction with STX17 region spans residues 1 to 142; sequence MSGWSGPLAR…KNYEEIAKVE (142 aa). At 32–185 the chain is on the lumenal side; that stretch reads ISFHLPVNSR…RDTNESTNTR (154 aa). The 153-residue stretch at 41 to 193 folds into the GOLD domain; sequence RKCLREEIHK…TRVLYFSIFS (153 aa). Residues 147 to 178 form a required for TMED10 and TMED2 cis-Golgi network localization region; it reads LEVELRRLEDLSESIVNDFAYMKKREEEMRDT. A dimethylated arginine mark is found at R171 and R176. An N-linked (GlcNAc...) asparagine glycan is attached at N179. Residues 186-206 traverse the membrane as a helical segment; sequence VLYFSIFSMFCLIGLATWQVF. The tract at residues 204 to 219 is interaction with COPG1; the sequence is QVFYLRRFFKAKKLIE. The Cytoplasmic segment spans residues 207–219; that stretch reads YLRRFFKAKKLIE. Residues 207-219 form an interaction with ARF1 and IL1B region; sequence YLRRFFKAKKLIE. Residues 211 to 212 carry the COPII vesicle coat-binding motif; that stretch reads FF. The COPI vesicle coat-binding motif lies at 211–219; it reads FFKAKKLIE.

The protein belongs to the EMP24/GP25L family. As to quaternary structure, predominantly dimeric and to a lesser extent monomeric in the ER. Monomer and dimer in ERGIC and cis-Golgi network. Forms homooligomer (via GOLD domain); the assembly is promoted by direct binding with leaderless cargos and may form a protein channel that facilitates cargo entry into the ERGIC. Forms heterooligomeric complexes with other members of the p24 family such as TMED2, TMED7 and TMED9. Interacts (via GOLD domain) with TMED2 (via GOLD domain); the complex is required for export of TMED10 from the ER to the cis-Golgi network; the complex is proposed to be involved in cis-Golgi network dynamics and / or biogenesis. Associates with the COPI vesicle coat subunits (coatomer). Tetramerization of the cytoplasmic domain at the Golgi membrane in vitro; the complex is proposed to interact with COPI coatomer and induce budding of the vesicles. Interacts with COPG1; the interaction involves TMED10 homodimer. Interacts with ARF1 (GDP-bound); the interaction probably involves a TMED10 oligomer. Interacts with SEC23A, SEC24B, SEC24C and SEC24D components of the coat protein complex II/COPII, indicative of an association of TMED10 with the COPII vesicle coat. Interacts with CD59. Interacts with MPPE1/PGAP5; the complex might recruit and sort GPI-anchored proteins to the ER-exit site, or the interaction might lead to recycling of PGAP5 between the ER and the Golgi. Interacts with F2LR1/PAR2. Interacts with KDELR2/ERD2; the interaction is disrupted by KDELR2 ligand. Found in a complex composed at least of SURF4, TMED2 and TMED10. Associates with the presenilin-dependent gamma-secretase complex. Interacts with STX17; the interaction is direct. Interacts with IL-1; the interaction is direct. Interacts with RAB21 (active GTP-bound form); the interaction is indirect and regulates TMED10 abundance and localization at the Golgi.

It localises to the endoplasmic reticulum membrane. Its subcellular location is the endoplasmic reticulum-Golgi intermediate compartment membrane. The protein resides in the golgi apparatus membrane. The protein localises to the golgi apparatus. It is found in the cis-Golgi network membrane. It localises to the trans-Golgi network membrane. Its subcellular location is the cytoplasmic vesicle. The protein resides in the secretory vesicle membrane. The protein localises to the cell membrane. It is found in the melanosome. In terms of biological role, cargo receptor involved in protein vesicular trafficking and quality control in the endoplasmic reticulum (ER) and Golgi. The p24 protein family is a group of transmembrane proteins that bind coat protein complex I/COPI and coat protein complex II/COPII involved in vesicular trafficking between the membranes. Acts at the lumenal side for incorporation of secretory cargo molecules into transport vesicles and involved in vesicle coat formation at the cytoplasmic side. Mainly functions in the early secretory pathway and cycles between the ER, ER-Golgi intermediate compartment (ERGIC) and Golgi, mediating cargo transport through COPI and COPII-coated vesicles. In COPII vesicle-mediated anterograde transport, involved in the transport of GPI-anchored proteins by acting together with TMED2 as their cargo receptor; the function specifically implies SEC24C and SEC24D of the COPII vesicle coat and lipid raft-like microdomains of the ER. Recognizes GPI anchors structural remodeled in the ER by the GPI inositol-deacylase/PGAP1 and the metallophosphoesterase MPPE1/PGAP5. In COPI vesicle-mediated retrograde transport, involved in the biogenesis of COPI vesicles and vesicle coat recruitment. Involved in trafficking of amyloid beta A4 protein and soluble APP-beta release (independent from the modulation of gamma-secretase activity). Involved in the KDELR2-mediated retrograde transport of the toxin A subunit (CTX-A-K63)together with COPI and the COOH terminus of KDELR2. On Golgi membranes, acts as a primary receptor for ARF1-GDP, a GTP-binding protein involved in COPI-vesicle formation. Increases coatomer-dependent GTPase-activating activity of ARFGAP2 which mediates the hydrolysis of ARF1-bound GTP and therefore modulates protein trafficking from the Golgi apparatus. Involved in the exocytic trafficking of G protein-coupled receptors F2LR1/PAR2 (trypsin and tryspin-like enzyme receptor), OPRM1 (opioid receptor) and P2RY4 (UTD and UDP receptor) from the Golgi to the plasma membrane, thus contributing to receptor resensitization. In addition to its cargo receptor activity, may also act as a protein channel after oligomerization, facilitating the post-translational entry of leaderless cytoplasmic cargo into the ERGIC. Involved in the translocation into ERGIC, the vesicle entry and the secretion of leaderless cargos (lacking the secretion signal sequence), including the mature form of interleukin 1/IL-1 family members, the alpha-crystallin B chain HSPB5, the carbohydrate-binding proteins galectin-1/LGALS1 and galectin-3/LGALS3, the microtubule-associated protein Tau/MAPT, and the annexin A1/ANXA1; the translocation process is dependent on cargo protein unfolding and enhanced by chaperones HSP90AB1 and HSP90B1/GRP9. Could also associates with the presenilin-dependent gamma-secretase complex in order to regulate gamma-cleavages of the amyloid beta A4 protein to yield amyloid-beta 40/Abeta40. This is Transmembrane emp24 domain-containing protein 10 (TMED10) from Oryctolagus cuniculus (Rabbit).